Reading from the N-terminus, the 1208-residue chain is DNA-directed RNA polymerase subunit beta (1208 aa).

Belongs to the RNA polymerase beta chain family. As to quaternary structure, the RNAP catalytic core consists of 2 alpha, 1 beta, 1 beta' and 1 omega subunit. When a sigma factor is associated with the core the holoenzyme is formed, which can initiate transcription.

It carries out the reaction RNA(n) + a ribonucleoside 5'-triphosphate = RNA(n+1) + diphosphate. Its function is as follows. DNA-dependent RNA polymerase catalyzes the transcription of DNA into RNA using the four ribonucleoside triphosphates as substrates. This Enterococcus faecium (Streptococcus faecium) protein is DNA-directed RNA polymerase subunit beta.